The chain runs to 349 residues: Achromobactin transport system permease protein CbrC (349 aa).

Helical transmembrane passes span 32 to 52 (LALL…KLML), 82 to 102 (VLAA…QAMI), 111 to 131 (ILGI…FLAA), 138 to 158 (LPLA…WLAW), 168 to 188 (VLTG…MLVF), 190 to 210 (PLTT…GASW), 216 to 236 (LGGW…QVRV), 263 to 283 (VALA…GLIA), 290 to 310 (LVAP…AGLV), and 325 to 345 (DLPA…YLLI).

It belongs to the binding-protein-dependent transport system permease family. FecCD subfamily.

The protein localises to the cell inner membrane. Its function is as follows. Part of the binding-protein-dependent transport system CbrABCD for uptake of the siderophore achromobactin. Probably responsible for the translocation of the substrate across the membrane. The polypeptide is Achromobactin transport system permease protein CbrC (cbrC) (Dickeya dadantii (strain 3937) (Erwinia chrysanthemi (strain 3937))).